Here is an 89-residue protein sequence, read N- to C-terminus: Small ribosomal subunit protein uS15 (89 aa).

It belongs to the universal ribosomal protein uS15 family. Part of the 30S ribosomal subunit. Forms a bridge to the 50S subunit in the 70S ribosome, contacting the 23S rRNA.

Its function is as follows. One of the primary rRNA binding proteins, it binds directly to 16S rRNA where it helps nucleate assembly of the platform of the 30S subunit by binding and bridging several RNA helices of the 16S rRNA. Forms an intersubunit bridge (bridge B4) with the 23S rRNA of the 50S subunit in the ribosome. This Desulforudis audaxviator (strain MP104C) protein is Small ribosomal subunit protein uS15.